Here is a 250-residue protein sequence, read N- to C-terminus: 3-deoxy-manno-octulosonate cytidylyltransferase (250 aa).

This sequence belongs to the KdsB family.

The protein localises to the cytoplasm. It catalyses the reaction 3-deoxy-alpha-D-manno-oct-2-ulosonate + CTP = CMP-3-deoxy-beta-D-manno-octulosonate + diphosphate. Its pathway is nucleotide-sugar biosynthesis; CMP-3-deoxy-D-manno-octulosonate biosynthesis; CMP-3-deoxy-D-manno-octulosonate from 3-deoxy-D-manno-octulosonate and CTP: step 1/1. It participates in bacterial outer membrane biogenesis; lipopolysaccharide biosynthesis. Activates KDO (a required 8-carbon sugar) for incorporation into bacterial lipopolysaccharide in Gram-negative bacteria. The chain is 3-deoxy-manno-octulosonate cytidylyltransferase from Francisella philomiragia subsp. philomiragia (strain ATCC 25017 / CCUG 19701 / FSC 153 / O#319-036).